Reading from the N-terminus, the 70-residue chain is Small ribosomal subunit protein bS21 (70 aa).

It belongs to the bacterial ribosomal protein bS21 family.

The polypeptide is Small ribosomal subunit protein bS21 (Paracidovorax citrulli (strain AAC00-1) (Acidovorax citrulli)).